The following is a 235-amino-acid chain: Dual specificity protein phosphatase 15 (235 aa).

Gly2 carries N-myristoyl glycine lipidation. The Tyrosine-protein phosphatase domain occupies 4-144; the sequence is GMTKVLPGLY…LEEFGWANSQ (141 aa). The active-site Phosphocysteine intermediate is Cys88. Over residues 183 to 193 the composition is skewed to low complexity; that stretch reads AASATTASSAA. Residues 183-212 are disordered; that stretch reads AASATTASSAAEGTLQRLVPRSPRDSHQPL.

The protein belongs to the protein-tyrosine phosphatase family. Non-receptor class dual specificity subfamily. In terms of tissue distribution, isoform 1 is expressed in testis; predominantly in developing spermatocytes (at protein level). Isoform 2 is highly expressed in testis. Expressed in spinal cord and specifically in oligodendroglial cells. Expressed in embryonic brain cortex; down-regulated in mice with experimental autoimmune encephalomyelitis (EAE).

The protein localises to the cell membrane. The catalysed reaction is O-phospho-L-tyrosyl-[protein] + H2O = L-tyrosyl-[protein] + phosphate. It catalyses the reaction O-phospho-L-seryl-[protein] + H2O = L-seryl-[protein] + phosphate. It carries out the reaction O-phospho-L-threonyl-[protein] + H2O = L-threonyl-[protein] + phosphate. Functionally, may dephosphorylate MAPK13, ATF2, ERBB3, PDGFRB and SNX6. May play a role in the regulation of oligodendrocyte differentiation. May play a role in the regulation of myelin formation. Involved in the regulation of Erk1/2 phosphorylation in Schwann cells; the signaling may be linked to the regulation of myelination. This Mus musculus (Mouse) protein is Dual specificity protein phosphatase 15.